Here is a 1028-residue protein sequence, read N- to C-terminus: Contactin-3 (1028 aa).

Residues Met-1–Gly-19 form the signal peptide. Ig-like C2-type domains follow at residues Pro-26–Gln-117, Glu-122–Leu-208, Pro-227–Thr-313, Pro-318–Lys-402, Pro-408–Thr-497, and Pro-499–Ile-593. Disulfide bonds link Cys-50-Cys-100, Cys-144-Cys-196, Cys-249-Cys-297, Cys-339-Cys-386, and Cys-431-Cys-479. Residues Asn-65 and Asn-193 are each glycosylated (N-linked (GlcNAc...) asparagine). Asn-375, Asn-468, and Asn-489 each carry an N-linked (GlcNAc...) asparagine glycan. Cys-521 and Cys-577 are joined by a disulfide. Fibronectin type-III domains are found at residues Pro-600–Ala-698, Pro-703–Glu-800, Ala-805–Thr-901, and Pro-902–Asp-998. Residues Gly-684–Ser-713 are disordered. Asn-765, Asn-860, Asn-895, Asn-913, Asn-931, and Asn-956 each carry an N-linked (GlcNAc...) asparagine glycan. The GPI-anchor amidated serine moiety is linked to residue Ser-1002. Positions Thr-1003 to Trp-1028 are cleaved as a propeptide — removed in mature form.

Belongs to the immunoglobulin superfamily. Contactin family. In terms of assembly, interacts with PTPRG. In brain, it is expressed in frontal lobe, occipital lobe, cerebellum and amygdala.

It is found in the cell membrane. In terms of biological role, contactins mediate cell surface interactions during nervous system development. Has some neurite outgrowth-promoting activity. The sequence is that of Contactin-3 (CNTN3) from Homo sapiens (Human).